The primary structure comprises 336 residues: Dihydroorotate dehydrogenase (quinone) (336 aa).

FMN contacts are provided by residues 62 to 66 (AGLDK) and threonine 86. Lysine 66 provides a ligand contact to substrate. 111–115 (NRMGF) contributes to the substrate binding site. FMN-binding residues include asparagine 139 and asparagine 172. Residue asparagine 172 participates in substrate binding. Serine 175 (nucleophile) is an active-site residue. Asparagine 177 provides a ligand contact to substrate. Residues lysine 217 and threonine 245 each coordinate FMN. Position 246–247 (246–247 (NT)) interacts with substrate. Residues glycine 268, glycine 297, and 318-319 (YS) each bind FMN.

Belongs to the dihydroorotate dehydrogenase family. Type 2 subfamily. As to quaternary structure, monomer. Requires FMN as cofactor.

It localises to the cell membrane. It carries out the reaction (S)-dihydroorotate + a quinone = orotate + a quinol. Its pathway is pyrimidine metabolism; UMP biosynthesis via de novo pathway; orotate from (S)-dihydroorotate (quinone route): step 1/1. Catalyzes the conversion of dihydroorotate to orotate with quinone as electron acceptor. The protein is Dihydroorotate dehydrogenase (quinone) of Shigella flexneri serotype 5b (strain 8401).